Reading from the N-terminus, the 444-residue chain is Exodeoxyribonuclease 7 large subunit (444 aa).

Belongs to the XseA family. Heterooligomer composed of large and small subunits.

The protein resides in the cytoplasm. It carries out the reaction Exonucleolytic cleavage in either 5'- to 3'- or 3'- to 5'-direction to yield nucleoside 5'-phosphates.. In terms of biological role, bidirectionally degrades single-stranded DNA into large acid-insoluble oligonucleotides, which are then degraded further into small acid-soluble oligonucleotides. The chain is Exodeoxyribonuclease 7 large subunit from Rickettsia akari (strain Hartford).